A 72-amino-acid chain; its full sequence is Rubredoxin in uptake hydrogenase operon (72 aa).

In terms of domain architecture, Rubredoxin-like spans 19–70 (DAVLECKICWHRYDPAVGDEVWQILAGTPFAALPAHWRCPQCDGDREQFMVV). 4 residues coordinate Fe cation: C24, C27, C57, and C60.

The protein belongs to the rubredoxin family. It depends on Fe(3+) as a cofactor.

Could be an electron transport intermediate in hydrogen oxidation. This is Rubredoxin in uptake hydrogenase operon (hupR) from Azotobacter chroococcum mcd 1.